Reading from the N-terminus, the 759-residue chain is Hormone-sensitive lipase (759 aa).

Positions His349–Gly351 match the Involved in the stabilization of the negatively charged intermediate by the formation of the oxyanion hole motif. The active site involves Ser423. The disordered stretch occupies residues Gly534–Ser553. A Phosphoserine modification is found at Ser557. Residue Ser559 is modified to Phosphoserine; by AMPK. Thr574 bears the Phosphothreonine mark. Residues Leu583–Ser604 form a disordered region. The span at Asn585–Ser604 shows a compositional bias: polar residues. Phosphoserine is present on residues Ser597, Ser618, Ser650, and Ser651. Active-site residues include Asp694 and His724.

Belongs to the 'GDXG' lipolytic enzyme family. As to quaternary structure, monomer and homodimer. Interacts with CAVIN1 in the adipocyte cytoplasm. Interacts with PLIN5. Phosphorylation by AMPK reduces its translocation towards the lipid droplets.

Its subcellular location is the cell membrane. It localises to the membrane. The protein localises to the caveola. It is found in the cytoplasm. The protein resides in the cytosol. Its subcellular location is the lipid droplet. The catalysed reaction is a diacylglycerol + H2O = a monoacylglycerol + a fatty acid + H(+). It carries out the reaction a triacylglycerol + H2O = a diacylglycerol + a fatty acid + H(+). It catalyses the reaction a monoacylglycerol + H2O = glycerol + a fatty acid + H(+). The enzyme catalyses Hydrolyzes glycerol monoesters of long-chain fatty acids.. The catalysed reaction is cholesteryl (9Z-octadecenoate) + H2O = cholesterol + (9Z)-octadecenoate + H(+). It carries out the reaction all-trans-retinyl hexadecanoate + H2O = all-trans-retinol + hexadecanoate + H(+). It catalyses the reaction 1,2-di-(9Z-octadecenoyl)-glycerol + H2O = (9Z-octadecenoyl)-glycerol + (9Z)-octadecenoate + H(+). The enzyme catalyses 2-(5Z,8Z,11Z,14Z-eicosatetraenoyl)-glycerol + H2O = glycerol + (5Z,8Z,11Z,14Z)-eicosatetraenoate + H(+). The catalysed reaction is 1-(9Z-octadecenoyl)-glycerol + H2O = glycerol + (9Z)-octadecenoate + H(+). It carries out the reaction 2-(9Z-octadecenoyl)-glycerol + H2O = glycerol + (9Z)-octadecenoate + H(+). It catalyses the reaction 1-O-hexadecyl-2-acetyl-sn-glycerol + H2O = 1-O-hexadecyl-sn-glycerol + acetate + H(+). The enzyme catalyses 1,2-di-(9Z-octadecenoyl)-sn-glycerol + H2O = (9Z-octadecenoyl)-glycerol + (9Z)-octadecenoate + H(+). The catalysed reaction is 1,3-di-(9Z-octadecenoyl)-glycerol + H2O = 1-(9Z-octadecenoyl)-glycerol + (9Z)-octadecenoate + H(+). It carries out the reaction 1,2-di-(9Z-octadecenoyl)-glycerol + (9Z)-octadecenoate + H(+) = 1,2,3-tri-(9Z-octadecenoyl)-glycerol + H2O. It catalyses the reaction 2,3-di-(9Z)-octadecenoyl-sn-glycerol + H2O = 2-(9Z-octadecenoyl)-glycerol + (9Z)-octadecenoate + H(+). The enzyme catalyses 1,2,3-tri-(9Z-octadecenoyl)-glycerol + H2O = di-(9Z)-octadecenoylglycerol + (9Z)-octadecenoate + H(+). The catalysed reaction is 1,2-di-(9Z-octadecenoyl)-glycerol + H2O = 2-(9Z-octadecenoyl)-glycerol + (9Z)-octadecenoate + H(+). It functions in the pathway glycerolipid metabolism; triacylglycerol degradation. In terms of biological role, lipase with broad substrate specificity, catalyzing the hydrolysis of triacylglycerols (TAGs), diacylglycerols (DAGs), monoacylglycerols (MAGs), cholesteryl esters and retinyl esters. Shows a preferential hydrolysis of DAGs over TAGs and MAGs and of the fatty acid (FA) esters at the sn-1 and sn-2 positions of the glycerol backbone in TAGs. Preferentially hydrolyzes FA esters at the sn-3 position of the glycerol backbone in DAGs. Catalyzes the hydrolysis of 2-arachidonoylglycerol, an endocannabinoid and of 2-acetyl monoalkylglycerol ether, the penultimate precursor of the pathway for de novo synthesis of platelet-activating factor. In adipose tissue and heart, it primarily hydrolyzes stored triglycerides to free fatty acids, while in steroidogenic tissues, it principally converts cholesteryl esters to free cholesterol for steroid hormone production. The sequence is that of Hormone-sensitive lipase (Lipe) from Mus musculus (Mouse).